The following is a 342-amino-acid chain: Phosphate acyltransferase (342 aa).

It belongs to the PlsX family. In terms of assembly, homodimer. Probably interacts with PlsY.

Its subcellular location is the cytoplasm. The catalysed reaction is a fatty acyl-[ACP] + phosphate = an acyl phosphate + holo-[ACP]. The protein operates within lipid metabolism; phospholipid metabolism. Functionally, catalyzes the reversible formation of acyl-phosphate (acyl-PO(4)) from acyl-[acyl-carrier-protein] (acyl-ACP). This enzyme utilizes acyl-ACP as fatty acyl donor, but not acyl-CoA. The polypeptide is Phosphate acyltransferase (Shewanella sp. (strain ANA-3)).